Here is a 528-residue protein sequence, read N- to C-terminus: Bifunctional pantoate ligase/cytidylate kinase (528 aa).

The interval 1 to 293 is pantoate--beta-alanine ligase; it reads MRLFTTIAGL…IGSCRLIDNI (293 aa). 34-41 is an ATP binding site; the sequence is MGALHKGH. The active-site Proton donor is the His41. Gln65 provides a ligand contact to (R)-pantoate. Residue Gln65 coordinates beta-alanine. 160 to 163 is a binding site for ATP; sequence GQKD. Residue Gln166 participates in (R)-pantoate binding. ATP is bound by residues Ile189 and 197–200; that span reads ISSR. The tract at residues 294–528 is cytidylate kinase; that stretch reads LLRNRKPIIA…YGKSSVNNII (235 aa).

This sequence in the N-terminal section; belongs to the pantothenate synthetase family. The protein in the C-terminal section; belongs to the cytidylate kinase family. Type 1 subfamily.

Its subcellular location is the cytoplasm. The catalysed reaction is (R)-pantoate + beta-alanine + ATP = (R)-pantothenate + AMP + diphosphate + H(+). It carries out the reaction CMP + ATP = CDP + ADP. It catalyses the reaction dCMP + ATP = dCDP + ADP. It participates in cofactor biosynthesis; (R)-pantothenate biosynthesis; (R)-pantothenate from (R)-pantoate and beta-alanine: step 1/1. Functionally, catalyzes the condensation of pantoate with beta-alanine in an ATP-dependent reaction via a pantoyl-adenylate intermediate. In terms of biological role, catalyzes the transfer of a phosphate group from ATP to either CMP or dCMP to form CDP or dCDP and ADP, respectively. The chain is Bifunctional pantoate ligase/cytidylate kinase from Trichodesmium erythraeum (strain IMS101).